Consider the following 257-residue polypeptide: RING-H2 finger protein ATL5 (257 aa).

Residues 28–48 (IMLASVIILFVAVILILCFHS) traverse the membrane as a helical segment. Residues 113-155 (CSVCLSEFEEDDEGRVLPKCGHVFHVDCIDTWFRSRSSCPLCR) form an RING-type; atypical zinc finger. The disordered stretch occupies residues 181 to 209 (EDTEAGSSSSSDESESSTPSSSSGSPVRF). A compositionally biased stretch (low complexity) spans 185 to 206 (AGSSSSSDESESSTPSSSSGSP).

The protein belongs to the RING-type zinc finger family. ATL subfamily.

It is found in the membrane. It carries out the reaction S-ubiquitinyl-[E2 ubiquitin-conjugating enzyme]-L-cysteine + [acceptor protein]-L-lysine = [E2 ubiquitin-conjugating enzyme]-L-cysteine + N(6)-ubiquitinyl-[acceptor protein]-L-lysine.. Its pathway is protein modification; protein ubiquitination. This Arabidopsis thaliana (Mouse-ear cress) protein is RING-H2 finger protein ATL5 (ATL5).